Reading from the N-terminus, the 98-residue chain is NADH-ubiquinone oxidoreductase chain 4L (98 aa).

3 helical membrane passes run 1 to 21 (MPPIYINIILAYTASLVGLLM), 29 to 49 (SLLCLEGMMLSLFILATILSL), and 61 to 81 (IILLIFAGCETAVGLALLVMI).

This sequence belongs to the complex I subunit 4L family. In terms of assembly, core subunit of respiratory chain NADH dehydrogenase (Complex I) which is composed of 45 different subunits.

The protein resides in the mitochondrion inner membrane. The enzyme catalyses a ubiquinone + NADH + 5 H(+)(in) = a ubiquinol + NAD(+) + 4 H(+)(out). Core subunit of the mitochondrial membrane respiratory chain NADH dehydrogenase (Complex I) which catalyzes electron transfer from NADH through the respiratory chain, using ubiquinone as an electron acceptor. Part of the enzyme membrane arm which is embedded in the lipid bilayer and involved in proton translocation. The protein is NADH-ubiquinone oxidoreductase chain 4L (MT-ND4L) of Galeopterus variegatus (Malayan flying lemur).